A 178-amino-acid polypeptide reads, in one-letter code: Nicotinamide-nucleotide adenylyltransferase (178 aa).

It belongs to the archaeal NMN adenylyltransferase family.

It localises to the cytoplasm. The catalysed reaction is beta-nicotinamide D-ribonucleotide + ATP + H(+) = diphosphate + NAD(+). It functions in the pathway cofactor biosynthesis; NAD(+) biosynthesis; NAD(+) from nicotinamide D-ribonucleotide: step 1/1. The sequence is that of Nicotinamide-nucleotide adenylyltransferase from Pyrobaculum neutrophilum (strain DSM 2338 / JCM 9278 / NBRC 100436 / V24Sta) (Thermoproteus neutrophilus).